The chain runs to 153 residues: Small ribosomal subunit protein uS13 (153 aa).

Residues 132–153 (VRGQRTRSHHRKGRTVGVIKKK) form a disordered region. A compositionally biased stretch (basic residues) spans 135–153 (QRTRSHHRKGRTVGVIKKK).

Belongs to the universal ribosomal protein uS13 family. As to quaternary structure, part of the 30S ribosomal subunit. Forms a loose heterodimer with protein S19. Forms two bridges to the 50S subunit in the 70S ribosome.

Its function is as follows. Located at the top of the head of the 30S subunit, it contacts several helices of the 16S rRNA. In the 70S ribosome it contacts the 23S rRNA (bridge B1a) and protein L5 of the 50S subunit (bridge B1b), connecting the 2 subunits; these bridges are implicated in subunit movement. The chain is Small ribosomal subunit protein uS13 from Nanoarchaeum equitans (strain Kin4-M).